We begin with the raw amino-acid sequence, 164 residues long: MEVIRDGEGESVKYKPGGRLDMSHGFLRHIRRNQIARDDYDREVKQAKEKQRRRHTNTPRRPRRPDRQVYNPRIRNGSEPGVNAEAEDWNESSSGTEMENTGTELFWLDYQADNGKITSFIVHKEDKPEVIVQRVAEKNVLDSSMRAALLARVGQEMNKRCDKR.

Composition is skewed to basic and acidic residues over residues 1 to 13 (MEVIRDGEGESVK) and 35 to 49 (IARDDYDREVKQAKE). Positions 1–98 (MEVIRDGEGE…WNESSSGTEM (98 aa)) are disordered. A compositionally biased stretch (basic residues) spans 50–64 (KQRRRHTNTPRRPRR).

Belongs to the UPF0561 family.

This is UPF0561 protein C2orf68 homolog from Danio rerio (Zebrafish).